The primary structure comprises 160 residues: Zinc finger A20 and AN1 domain-containing stress-associated protein 6 (160 aa).

Residues 18–52 (PEAPILCVNNCGFFGSRMTENMCSKCYRDTVKAKT) form an A20-type zinc finger. Residues Cys-24, Cys-28, Cys-40, and Cys-43 each contribute to the Zn(2+) site. The tract at residues 73-94 (EVTDGGSGSVADGKQVMEEDTP) is disordered. The AN1-type zinc-finger motif lies at 95–141 (KPPSNRCLSCRKKVGLTGFKCRCGGTFCSMHRYADSHKCTFDYKQVG). 8 residues coordinate Zn(2+): Cys-101, Cys-104, Cys-115, Cys-117, Cys-122, His-125, His-131, and Cys-133.

Its function is as follows. May be involved in environmental stress response. This is Zinc finger A20 and AN1 domain-containing stress-associated protein 6 (SAP6) from Oryza sativa subsp. japonica (Rice).